The following is an 80-amino-acid chain: Large ribosomal subunit protein bL31 (80 aa).

Belongs to the bacterial ribosomal protein bL31 family. Type A subfamily. Part of the 50S ribosomal subunit.

Functionally, binds the 23S rRNA. In Nostoc punctiforme (strain ATCC 29133 / PCC 73102), this protein is Large ribosomal subunit protein bL31.